Here is a 594-residue protein sequence, read N- to C-terminus: UvrABC system protein C (594 aa).

Residues 14–91 (DKPGCYLMKD…IKKHDPKYNV (78 aa)) enclose the GIY-YIG domain. The 36-residue stretch at 196-231 (SDIKEQLRERMEKAAEDLDFERAKELRDTIAQMEKV) folds into the UVR domain.

It belongs to the UvrC family. As to quaternary structure, interacts with UvrB in an incision complex.

The protein localises to the cytoplasm. In terms of biological role, the UvrABC repair system catalyzes the recognition and processing of DNA lesions. UvrC both incises the 5' and 3' sides of the lesion. The N-terminal half is responsible for the 3' incision and the C-terminal half is responsible for the 5' incision. In Shouchella clausii (strain KSM-K16) (Alkalihalobacillus clausii), this protein is UvrABC system protein C.